A 218-amino-acid chain; its full sequence is MRLILLGAPGAGKGTQANYIREKFGIPQISTGDMLRAAVKAGTPLGLEAKAIMDAGGLVRDDIIIGLVKERIAQDDCANGFLFDGFPRTIPQAEAMIAAGVDIDYVVEIDVPDAAIVERMAGRRVHLASGRTYHVTFNPPKAAGKDDVTGEDLVQRDDDKEETVKKRLAVYHEQTAVLVGFYGKLAESGSAKAPKYVKIDGTRAVETVRDDVLKALGA.

10 to 15 (GAGKGT) serves as a coordination point for ATP. Positions 30–59 (STGDMLRAAVKAGTPLGLEAKAIMDAGGLV) are NMP. AMP contacts are provided by residues threonine 31, arginine 36, 57–59 (GLV), 85–88 (GFPR), and glutamine 92. The LID stretch occupies residues 122–159 (GRRVHLASGRTYHVTFNPPKAAGKDDVTGEDLVQRDDD). ATP contacts are provided by residues arginine 123 and 132–133 (TY). AMP-binding residues include arginine 156 and arginine 167. Arginine 203 provides a ligand contact to ATP.

Belongs to the adenylate kinase family. Monomer.

The protein resides in the cytoplasm. It carries out the reaction AMP + ATP = 2 ADP. Its pathway is purine metabolism; AMP biosynthesis via salvage pathway; AMP from ADP: step 1/1. Its function is as follows. Catalyzes the reversible transfer of the terminal phosphate group between ATP and AMP. Plays an important role in cellular energy homeostasis and in adenine nucleotide metabolism. This chain is Adenylate kinase, found in Chromobacterium violaceum (strain ATCC 12472 / DSM 30191 / JCM 1249 / CCUG 213 / NBRC 12614 / NCIMB 9131 / NCTC 9757 / MK).